A 492-amino-acid polypeptide reads, in one-letter code: 3-octaprenyl-4-hydroxybenzoate carboxy-lyase (492 aa).

Asn175 is a Mn(2+) binding site. Prenylated FMN is bound by residues 178–180 (IYR), 192–194 (RWL), and 197–198 (RG). Mn(2+) is bound at residue Glu241. Asp290 functions as the Proton donor in the catalytic mechanism.

It belongs to the UbiD family. Homohexamer. Prenylated FMN serves as cofactor. Requires Mn(2+) as cofactor.

The protein localises to the cell membrane. The enzyme catalyses a 4-hydroxy-3-(all-trans-polyprenyl)benzoate + H(+) = a 2-(all-trans-polyprenyl)phenol + CO2. It functions in the pathway cofactor biosynthesis; ubiquinone biosynthesis. In terms of biological role, catalyzes the decarboxylation of 3-octaprenyl-4-hydroxy benzoate to 2-octaprenylphenol, an intermediate step in ubiquinone biosynthesis. The protein is 3-octaprenyl-4-hydroxybenzoate carboxy-lyase of Salmonella typhi.